Here is a 488-residue protein sequence, read N- to C-terminus: Cobyric acid synthase (488 aa).

The 194-residue stretch at 247 to 440 (LLRVIVPVLP…VHGVFDEPTA (194 aa)) folds into the GATase cobBQ-type domain. Catalysis depends on Cys-328, which acts as the Nucleophile. Residue His-432 is part of the active site.

It belongs to the CobB/CobQ family. CobQ subfamily.

It participates in cofactor biosynthesis; adenosylcobalamin biosynthesis. In terms of biological role, catalyzes amidations at positions B, D, E, and G on adenosylcobyrinic A,C-diamide. NH(2) groups are provided by glutamine, and one molecule of ATP is hydrogenolyzed for each amidation. The protein is Cobyric acid synthase of Cupriavidus pinatubonensis (strain JMP 134 / LMG 1197) (Cupriavidus necator (strain JMP 134)).